The sequence spans 166 residues: CDP-archaeol synthase (166 aa).

The next 4 membrane-spanning stretches (helical) occupy residues 42–62 (FFGG…AATA), 73–93 (FLSV…KSFL), 104–124 (SWFL…ILIF), and 128–148 (WLFG…TPLL).

Belongs to the CDP-archaeol synthase family. Mg(2+) is required as a cofactor.

It localises to the cell membrane. The catalysed reaction is 2,3-bis-O-(geranylgeranyl)-sn-glycerol 1-phosphate + CTP + H(+) = CDP-2,3-bis-O-(geranylgeranyl)-sn-glycerol + diphosphate. Its pathway is membrane lipid metabolism; glycerophospholipid metabolism. Its function is as follows. Catalyzes the formation of CDP-2,3-bis-(O-geranylgeranyl)-sn-glycerol (CDP-archaeol) from 2,3-bis-(O-geranylgeranyl)-sn-glycerol 1-phosphate (DGGGP) and CTP. This reaction is the third ether-bond-formation step in the biosynthesis of archaeal membrane lipids. In Methanoculleus marisnigri (strain ATCC 35101 / DSM 1498 / JR1), this protein is CDP-archaeol synthase.